The chain runs to 284 residues: Formamidopyrimidine-DNA glycosylase (284 aa).

The active-site Schiff-base intermediate with DNA is the proline 2. Glutamate 3 acts as the Proton donor in catalysis. The active-site Proton donor; for beta-elimination activity is the lysine 61. Residues histidine 95, arginine 115, and arginine 157 each coordinate DNA. An FPG-type zinc finger spans residues 243-277 (AVYGRAGQPCRRCGTAIVREPFMNRSSFRCPACQP). Arginine 267 (proton donor; for delta-elimination activity) is an active-site residue.

It belongs to the FPG family. In terms of assembly, monomer. It depends on Zn(2+) as a cofactor.

The catalysed reaction is Hydrolysis of DNA containing ring-opened 7-methylguanine residues, releasing 2,6-diamino-4-hydroxy-5-(N-methyl)formamidopyrimidine.. The enzyme catalyses 2'-deoxyribonucleotide-(2'-deoxyribose 5'-phosphate)-2'-deoxyribonucleotide-DNA = a 3'-end 2'-deoxyribonucleotide-(2,3-dehydro-2,3-deoxyribose 5'-phosphate)-DNA + a 5'-end 5'-phospho-2'-deoxyribonucleoside-DNA + H(+). Functionally, involved in base excision repair of DNA damaged by oxidation or by mutagenic agents. Acts as a DNA glycosylase that recognizes and removes damaged bases. Has a preference for oxidized purines, such as 7,8-dihydro-8-oxoguanine (8-oxoG). Has AP (apurinic/apyrimidinic) lyase activity and introduces nicks in the DNA strand. Cleaves the DNA backbone by beta-delta elimination to generate a single-strand break at the site of the removed base with both 3'- and 5'-phosphates. The sequence is that of Formamidopyrimidine-DNA glycosylase from Acidothermus cellulolyticus (strain ATCC 43068 / DSM 8971 / 11B).